The sequence spans 377 residues: 5-hydroxytryptamine receptor 1D (377 aa).

N-linked (GlcNAc...) asparagine glycosylation is found at Asn-5, Asn-17, and Asn-21. 3 helical membrane-spanning segments follow: residues 39 to 64 (ISLALLLSIITMATALSNAFVLTTIF), 76 to 97 (LIGSLAMTDLLVSILVMPISIA), and 110 to 134 (LCDIWLSSDITCCTASILHLCVIAL). Cysteines 111 and 188 form a disulfide. Asp-118 and Cys-122 together coordinate serotonin. Positions 135–137 (DRY) match the DRY motif; important for ligand-induced conformation changes motif. 4 helical membrane-spanning segments follow: residues 155–176 (AAVMIATVWVISICISIPPLFW), 195–218 (ISYTIYSTCGAFYIPSVLLIILYG), 301–326 (KTLGIILGAFIVCWLPFFVASLVLPI), and 336–359 (ALFDFFTWLGYLNSLINPIIYTVF). Residue Ser-321 coordinates serotonin. An NPxxY motif; important for ligand-induced conformation changes and signaling motif is present at residues 352 to 356 (NPIIY).

The protein belongs to the G-protein coupled receptor 1 family. Homodimer. Heterodimer with HTR1B.

Its subcellular location is the cell membrane. Functionally, G-protein coupled receptor for 5-hydroxytryptamine (serotonin). Also functions as a receptor for ergot alkaloid derivatives, various anxiolytic and antidepressant drugs and other psychoactive substances. Ligand binding causes a conformation change that triggers signaling via guanine nucleotide-binding proteins (G proteins) and modulates the activity of downstream effectors, such as adenylate cyclase. HTR1D is coupled to G(i)/G(o) G alpha proteins and mediates inhibitory neurotransmission by inhibiting adenylate cyclase activity. Regulates the release of 5-hydroxytryptamine in the brain, and thereby affects neural activity. May also play a role in regulating the release of other neurotransmitters. May play a role in vasoconstriction. This chain is 5-hydroxytryptamine receptor 1D (HTR1D), found in Canis lupus familiaris (Dog).